The sequence spans 474 residues: Fumarate hydratase class II (474 aa).

Substrate-binding positions include 104–106 (SGT), 128–131 (HPND), 138–140 (SSN), and Thr186. His187 (proton donor/acceptor) is an active-site residue. Residue Ser318 is part of the active site. Residues Ser319 and 324-326 (KVN) contribute to the substrate site.

The protein belongs to the class-II fumarase/aspartase family. Fumarase subfamily. In terms of assembly, homotetramer.

The protein resides in the cytoplasm. The catalysed reaction is (S)-malate = fumarate + H2O. The protein operates within carbohydrate metabolism; tricarboxylic acid cycle; (S)-malate from fumarate: step 1/1. Functionally, involved in the TCA cycle. Catalyzes the stereospecific interconversion of fumarate to L-malate. The protein is Fumarate hydratase class II of Mycobacterium bovis (strain ATCC BAA-935 / AF2122/97).